We begin with the raw amino-acid sequence, 489 residues long: Ulvan Lyase-PL25 (489 aa).

A signal peptide spans 1 to 31 (MNLNKTLRKNSPSGYKALLTFSIICGLMATG). Residue cysteine 32 is the site of N-palmitoyl cysteine attachment. Residue cysteine 32 is the site of S-diacylglycerol cysteine attachment. 2 residues coordinate substrate: asparagine 60 and asparagine 122. Histidine 123 serves as the catalytic Proton donor. Lysine 125 and histidine 143 together coordinate substrate. Tyrosine 188 functions as the Proton acceptor in the catalytic mechanism. Arginine 204, histidine 208, and tyrosine 246 together coordinate substrate. Residue histidine 208 coordinates Zn(2+). Zn(2+) contacts are provided by histidine 264, cysteine 266, and histidine 278. Position 278 (histidine 278) interacts with substrate.

This sequence belongs to the polysaccharide lyase 25 family.

The protein localises to the cell membrane. Ulvan lyase involved in ulvan degradation. Ulvan is the main polysaccharide component of the Ulvales (green seaweed) cell wall. It is composed of disaccharide building blocks comprising 3-sulfated rhamnose (Rha3S) linked to D-glucuronic acid (GlcA), L-iduronic acid (IduA), or D-xylose (Xyl). Ulvan lyase catalyzes the endolytic cleavage of the glycosidic bond between Rha3S and the uronic acids GlcA or IduA, producing oligosaccharides that have unsaturated 4-deoxy-L-threo-hex-4-enopyranosiduronic acid (deltaUA) at the non-reducing end. This results eventually in the degradation of the ulvan polysaccharide into deltaUA-Rha3S disaccharides and deltaUA-Rha3S-Xyl-Rha3S tetrasaccharides. The chain is Ulvan Lyase-PL25 from Pseudoalteromonas sp. (strain PLSV).